The primary structure comprises 322 residues: Short chain dehydrogenase AOL_s00215g274 (322 aa).

NAD(+) contacts are provided by residues 47–48 (AV), 104–106 (IAV), 197–201 (YNVSK), and 230–232 (VAT). The active-site Proton acceptor is Y197.

This sequence belongs to the short-chain dehydrogenases/reductases (SDR) family.

It participates in secondary metabolite biosynthesis; terpenoid biosynthesis. Functionally, short chain dehydrogenase; part of the gene cluster that mediates the biosynthesis of sesquiterpenyl epoxy-cyclohexenoids (SECs) such as anthrobotrisins and arthrosporols, metabolites that possess a novel hybrid carbon skeleton consisting of a polyketide-derived epoxycyclohexenol combined with a terpenoid-derived monocyclic sesquiterpenol substructure (PKS-PTS hybrid). The SEC pathway plays an important role for fungal soil colonization via decreasing fungal nematode-capturing ability. Within the pathway, the cytochrome P450 monooxygenase AOL_s00215g274 is involved in specific regional ketone reductions at C-4 of farnesyl epoxy-quinone. The pathway begins with the biosynthesis of 6-methylsalicylic acid (6-MSA), the first precursor of the polyketide-derived epoxycyclohexenol in arthrosporols, by the polyketide synthase (PKS) AOL_s00215g283 via condensation of 1 acetate and 3 malonate units. The 6-methylsalicylic acid decarboxylase AOL_s00215g281 then catalyzes the decarboxylation of 6-methylsalicylic acid to yield m-cresol. The cytochrome P450 monooxygenase AOL_s00215g282 further oxidizes m-cresol to yield toluquinol. With the assistance of the oxidoreductase AOL_s00215g277, the polyprenyl transferase AOL_s00215g276 catalyzes the farnesylation of toluquinol to produce farnesyl hydroquinone, the hybrid precursor for biosynthesis of SECs. Farnesyl hydroquinone undergoes epoxidation and then subsequent dehydrogenation to form farnesyl epoxy-quinone, the first and simplest SEC. The cytochrome P450 monooxygenase AOL_s00215g278 and the FAD-dependent monooxygenase AOL_s00215g279 might be involved in the oxygenation of the phenol moiety, most likely in the epoxy formation. The cytochrome P450 monooxygenases AOL_s00215g274 and AOL_s00215g280 are involved in specific regional ketone reductions at respectively C-4 and C-1 of farnesyl epoxy-quinone PubMed:33823587. This is Short chain dehydrogenase AOL_s00215g274 from Arthrobotrys oligospora (strain ATCC 24927 / CBS 115.81 / DSM 1491) (Nematode-trapping fungus).